The chain runs to 159 residues: Aspartate carbamoyltransferase regulatory chain (159 aa).

Positions 111, 116, 141, and 144 each coordinate Zn(2+).

Belongs to the PyrI family. As to quaternary structure, contains catalytic and regulatory chains. Zn(2+) serves as cofactor.

Its function is as follows. Involved in allosteric regulation of aspartate carbamoyltransferase. The protein is Aspartate carbamoyltransferase regulatory chain of Aeropyrum pernix (strain ATCC 700893 / DSM 11879 / JCM 9820 / NBRC 100138 / K1).